We begin with the raw amino-acid sequence, 61 residues long: Conotoxin 3 (61 aa).

A signal peptide spans 1 to 21 (MRCLPVFVILLLLIASVPSDA). Positions 22 to 48 (VQLKTKDDMPLPSFNGNARRTPRMLSN) are excised as a propeptide. Trp58 bears the 6'-bromotryptophan mark.

This sequence belongs to the conotoxin T superfamily. In terms of processing, contains 2 disulfide bonds that can be either 'C1-C3, C2-C4' or 'C1-C4, C2-C3', since these disulfide connectivities have been observed for conotoxins with cysteine framework V (for examples, see AC P0DQQ7 and AC P81755). Post-translationally, contains 2 disulfide bonds. Expressed by the venom duct.

The protein resides in the secreted. The polypeptide is Conotoxin 3 (Conus textile (Cloth-of-gold cone)).